We begin with the raw amino-acid sequence, 145 residues long: Large ribosomal subunit protein uL13 (145 aa).

The protein belongs to the universal ribosomal protein uL13 family. As to quaternary structure, part of the 50S ribosomal subunit.

Its function is as follows. This protein is one of the early assembly proteins of the 50S ribosomal subunit, although it is not seen to bind rRNA by itself. It is important during the early stages of 50S assembly. This chain is Large ribosomal subunit protein uL13, found in Bacillus cytotoxicus (strain DSM 22905 / CIP 110041 / 391-98 / NVH 391-98).